A 244-amino-acid chain; its full sequence is Transcriptional activator protein FnrA (244 aa).

The HTH crp-type domain maps to 159–232 (KTADERIATF…GKEVRILDSI (74 aa)). The segment at residues 192 to 211 (RNEIGNYLGLAVETVSRVFT) is a DNA-binding region (H-T-H motif).

Transcriptional regulator of arginine deiminase. This chain is Transcriptional activator protein FnrA (fnrA), found in Stutzerimonas stutzeri (Pseudomonas stutzeri).